A 590-amino-acid polypeptide reads, in one-letter code: Proline--tRNA ligase (590 aa).

Belongs to the class-II aminoacyl-tRNA synthetase family. ProS type 1 subfamily. In terms of assembly, homodimer.

It is found in the cytoplasm. It carries out the reaction tRNA(Pro) + L-proline + ATP = L-prolyl-tRNA(Pro) + AMP + diphosphate. Functionally, catalyzes the attachment of proline to tRNA(Pro) in a two-step reaction: proline is first activated by ATP to form Pro-AMP and then transferred to the acceptor end of tRNA(Pro). As ProRS can inadvertently accommodate and process non-cognate amino acids such as alanine and cysteine, to avoid such errors it has two additional distinct editing activities against alanine. One activity is designated as 'pretransfer' editing and involves the tRNA(Pro)-independent hydrolysis of activated Ala-AMP. The other activity is designated 'posttransfer' editing and involves deacylation of mischarged Ala-tRNA(Pro). The misacylated Cys-tRNA(Pro) is not edited by ProRS. The sequence is that of Proline--tRNA ligase from Clavibacter sepedonicus (Clavibacter michiganensis subsp. sepedonicus).